The chain runs to 539 residues: MKTIGEFNAAHGPEAIGLTDLAAVHWNLEAPRLYEEALRRNEAQLARGGALVATTGSHTGRSPKDKYVVRDAGTENEIWWDNNGSITPDQFATLLDDFRAHARGKELFAQDLFGGADPAHRVRARVYTELAWHSLFIRNLLIRPERADLAAYVPELTIIDLPSFQADPARHGCRSKTVIAIDFSQKIVLIGGSAYAGEMKKSVFTYLNYVLPGTGVMPMHCSANASLDETGDSALFFGLSGTGKTTLSNDSSRQLIGDDEHGWSRDGIFNFEGGCYAKTIRLSRNAEPEIYATTERFGTVMENVVIDPLTRVPDFDDASLTENTRCAYPLDFIANASATGRAGHPKNIVMLTCDAFGVMPPIAKLTGAEAMYHFLSGYTAKVAGTERGLTAPEATFSTCFGAPFMPRHPSVYGNLLRELMAEHGVDCWLVNTGWTGGGVGTGRRMPIRVTRRLLSAALDGSLAQVEFRRDPYFGFSVPVEVPGVETQVLSPVETWTNKAAFADTATRLVTMFRENFKRFESHVDADVRAAEPVAAAIAA.

Residues arginine 61, tyrosine 195, and lysine 201 each contribute to the substrate site. Residues lysine 201, histidine 220, and glycine 238–threonine 246 contribute to the ATP site. Residues lysine 201 and histidine 220 each coordinate Mn(2+). Aspartate 259 contacts Mn(2+). Positions 287, 325, and 450 each coordinate ATP. Arginine 325 contacts substrate.

This sequence belongs to the phosphoenolpyruvate carboxykinase (ATP) family. Requires Mn(2+) as cofactor.

The protein localises to the cytoplasm. The enzyme catalyses oxaloacetate + ATP = phosphoenolpyruvate + ADP + CO2. Its pathway is carbohydrate biosynthesis; gluconeogenesis. Involved in the gluconeogenesis. Catalyzes the conversion of oxaloacetate (OAA) to phosphoenolpyruvate (PEP) through direct phosphoryl transfer between the nucleoside triphosphate and OAA. This Methylorubrum extorquens (strain CM4 / NCIMB 13688) (Methylobacterium extorquens) protein is Phosphoenolpyruvate carboxykinase (ATP).